Consider the following 213-residue polypeptide: MDTIWDISPPIAPATPVWPGDTPVGIERVWRIEAGSPVNVARVTLSPHTGAHADAPLHYDADGTPIGAVPLDAYLGRCRVIHCIGARSAVTPEHVRAALAGAPPRVLLRTYGQAPQHAWDSAFCAVAPETIDLLAAHGVRLVGIDTPSLDPQESKTMDAHRRIRAHRMAILEGLVLDEIAAGDYELIALPLKFATLDASPVRAVLRALPAAPR.

Trp18 is a substrate binding site. His48, His52, and Asp54 together coordinate Zn(2+). The active-site Proton donor/acceptor is His58. Residues His160 and Glu172 each coordinate Zn(2+).

Belongs to the Cyclase 1 superfamily. KynB family. As to quaternary structure, homodimer. Requires Zn(2+) as cofactor.

The catalysed reaction is N-formyl-L-kynurenine + H2O = L-kynurenine + formate + H(+). Its pathway is amino-acid degradation; L-tryptophan degradation via kynurenine pathway; L-kynurenine from L-tryptophan: step 2/2. Catalyzes the hydrolysis of N-formyl-L-kynurenine to L-kynurenine, the second step in the kynurenine pathway of tryptophan degradation. This chain is Kynurenine formamidase, found in Burkholderia mallei (strain NCTC 10247).